We begin with the raw amino-acid sequence, 902 residues long: MSEISRVALFGKLNSLAYKAIEAATVFCKLRGNPYVELVHWFHQILQLPDSDLHQIVRQSGIDPARLAKDLTEALDRLPRGSTSITDLSSHVEEAVERGWVYGSLMFGESQVRTGYLVIGILKTPSLRHALTGLSAEFAKLKVEALTERFDEYVGASPENGLSASDGFNAGAAPGEASGALAPSAMGKQEALKRFTVDLTEQARSGKLDPIVGRDEEIRQLVDILMRRRQNNPILTGEAGVGKTAVVEGFALRIVAGDVPPALKDVELRALDVGLLQAGASMKGEFEQRLRQVIEDVQSSEKPIILFIDEAHTLVGAGGAAGTGDAANLLKPALARGTLRTVAATTWAEYKKHIEKDPALTRRFQVVQVDEPSEHKAILMMRGVASTMEKHHQVQILDEALEAAVRLSHRYIPARQLPDKSVSLLDTACARTAISLHAVPAEVDDSRRRIEALETELAIIRRESAIGVATAERQRNAETLLAEERERLAALEQRWAEEKRLVDELLETRARLRAAAEAVDAGGVPLGEGEVRLDEEQRQALHARLAELQAQLSALQGEEPLILPTVDYQAVASVVADWTGIPVGRMARNEIETVLNLDRHLKKRIIGQDHALEMIAKRIQTSRAGLDNPSKPIGVFMLAGTSGVGKTETALALAEAMYGGEQNVITINMSEFQEAHTVSTLKGAPPGYIGYGEGGVLTEAVRRKPYSVVLLDEVEKAHPDVHEIFFQVFDKGVMEDGEGRVIDFKNTLILLTTNAGTEMIASLCADPELMPEPEAIAKSLREPLLKIFPPALLGRLVTIPYYPLSDDMLKAISRLQLGRIKKRVEATHKVPFEFDEGVVDLIVSRCTETESGGRMIDAILTNTLLPDMSREFLTRMLEGKPLAGVRISSRDNQFHYDFAEAE.

The region spanning 10–151 (FGKLNSLAYK…KVEALTERFD (142 aa)) is the Clp R domain. Repeat regions lie at residues 13 to 78 (LNSL…LDRL) and 88 to 151 (LSSH…ERFD). 237–244 (GEAGVGKT) lines the ATP pocket. A coiled-coil region spans residues 441–559 (AEVDDSRRRI…AQLSALQGEE (119 aa)). 640-647 (GTSGVGKT) provides a ligand contact to ATP.

Belongs to the ClpA/ClpB family. In terms of assembly, interacts with TagJ.

It is found in the cytoplasm. Component of the H1 type VI (H1-T6SS) secretion system that plays a role in the release of toxins targeting both eukaryotic and prokaryotic species. Acts as an AAA(+) ATPase that disassembles the contracted sheath, which resets the systems for reassembly of an extended sheath that is ready to fire again. In Pseudomonas aeruginosa (strain ATCC 15692 / DSM 22644 / CIP 104116 / JCM 14847 / LMG 12228 / 1C / PRS 101 / PAO1), this protein is AAA+ ATPase ClpV1 (clpV1).